Reading from the N-terminus, the 310-residue chain is MEDIIYITGHKNPDTDSICSAIAYSELKNKLGFNTVPGRLGNISRETEFALNYFKANAPKLLENLSSNQDIIIVDHNERAQSVDNLEDLHLLEIIDHHRIADIQTSYPIFFRNEPVGCSSTIIGSMYFEKGIEPSKRAAGLMCSAIISDTLLFRSPTTTARDKEVLKKLAKIADIDPEKYASEMFKAGTSLKGKTVEEIFNSDYKAFNLGDKKIGVSQVTTMDIEGFDEYKKDMLAYMNKKVKDENFNAVLLLLTDIIKEGSLIIATGENTDLVNKAFNVELKDNAVYVPGILSRKKQVIPPLTSAIEGK.

Mn(2+) is bound by residues His10, Asp14, Asp16, Asp75, His97, and Asp149.

Belongs to the PPase class C family. The cofactor is Mn(2+).

Its subcellular location is the cytoplasm. It carries out the reaction diphosphate + H2O = 2 phosphate + H(+). The protein is Probable manganese-dependent inorganic pyrophosphatase of Clostridium acetobutylicum (strain ATCC 824 / DSM 792 / JCM 1419 / IAM 19013 / LMG 5710 / NBRC 13948 / NRRL B-527 / VKM B-1787 / 2291 / W).